The sequence spans 193 residues: MTEFLLLLIGTVLVNNFVLVQFLGLCPFMGVSGKLETAIGMSMATTFVLTLASLSSYLVEHYILLPLGIEYLRTLSFILVIAVVVQFTEMVVHKTSPTLYRLLGIFLPLITTNCAVLGVALLNINHDHNFIESVIYGFGAAVGFSLVLILFAAMRERLAVADVPAPFKGASISMITAGLMSLAFLGFTGLVKF.

The next 6 helical transmembrane spans lie at 4–24 (FLLL…QFLG), 39–59 (IGMS…SYLV), 63–83 (ILLP…VIAV), 102–122 (LLGI…VALL), 134–154 (VIYG…FAAM), and 171–191 (SISM…TGLV).

Belongs to the NqrDE/RnfAE family. As to quaternary structure, the complex is composed of six subunits: RnfA, RnfB, RnfC, RnfD, RnfE and RnfG.

The protein resides in the cell inner membrane. Functionally, part of a membrane-bound complex that couples electron transfer with translocation of ions across the membrane. The polypeptide is Ion-translocating oxidoreductase complex subunit A (Pseudoalteromonas atlantica (strain T6c / ATCC BAA-1087)).